We begin with the raw amino-acid sequence, 471 residues long: Glutamate--tRNA ligase 1 (471 aa).

The 'HIGH' region signature appears at 10 to 20; the sequence is PSPTGYLHIGG. Zn(2+) is bound by residues Cys-99, Cys-101, Cys-126, and Asp-128. Residues 238–242 carry the 'KMSKS' region motif; sequence RLSKR. Residue Lys-241 participates in ATP binding.

The protein belongs to the class-I aminoacyl-tRNA synthetase family. Glutamate--tRNA ligase type 1 subfamily. As to quaternary structure, monomer. Zn(2+) serves as cofactor.

The protein localises to the cytoplasm. It catalyses the reaction tRNA(Glu) + L-glutamate + ATP = L-glutamyl-tRNA(Glu) + AMP + diphosphate. In terms of biological role, catalyzes the attachment of glutamate to tRNA(Glu) in a two-step reaction: glutamate is first activated by ATP to form Glu-AMP and then transferred to the acceptor end of tRNA(Glu). The protein is Glutamate--tRNA ligase 1 of Alkalilimnicola ehrlichii (strain ATCC BAA-1101 / DSM 17681 / MLHE-1).